The primary structure comprises 387 residues: Patatin-02 (387 aa).

The first 23 residues, 1-23, serve as a signal peptide directing secretion; the sequence is MATTKSFLILIVMILATTSSTFA. The PNPLA domain occupies 32-230; sequence LSIDGGGIKG…TVADPALLSV (199 aa). Positions 36–41 match the GXGXXG motif; the sequence is GGGIKG. A GXSXG motif is present at residues 75–79; the sequence is GTSTG. Residue S77 is the Nucleophile of the active site. N115 is a glycosylation site (N-linked (GlcNAc...) asparagine). D216 acts as the Proton acceptor in catalysis. The short motif at 216–218 is the DGA/G element; the sequence is DGA. The stretch at 361 to 385 forms a coiled coil; it reads ETYEEALKRFAKLLSDRKKLRANKA.

Belongs to the patatin family. In terms of tissue distribution, tuber and stolon.

The protein localises to the vacuole. Probable lipolytic acyl hydrolase (LAH), an activity which is thought to be involved in the response of tubers to pathogens. In Solanum tuberosum (Potato), this protein is Patatin-02.